Consider the following 206-residue polypeptide: Small ribosomal subunit protein uS4A (206 aa).

Positions 98–164 (LRLDNVAYKL…EKFKTFAENP (67 aa)) constitute an S4 RNA-binding domain.

It belongs to the universal ribosomal protein uS4 family. As to quaternary structure, part of the 30S ribosomal subunit. Contacts protein S5. The interaction surface between S4 and S5 is involved in control of translational fidelity.

Its function is as follows. One of the primary rRNA binding proteins, it binds directly to 16S rRNA where it nucleates assembly of the body of the 30S subunit. Functionally, with S5 and S12 plays an important role in translational accuracy. This chain is Small ribosomal subunit protein uS4A (rspD1), found in Clostridium acetobutylicum (strain ATCC 824 / DSM 792 / JCM 1419 / IAM 19013 / LMG 5710 / NBRC 13948 / NRRL B-527 / VKM B-1787 / 2291 / W).